We begin with the raw amino-acid sequence, 397 residues long: Calponin-like protein clik-2 (397 aa).

Calponin-like repeat units follow at residues 29–54, 73–98, 119–144, 161–189, 209–234, and 255–280; these read LSQQ…RWNI, LRVQ…RFQV, IPKQ…RNQV, LCFQ…RQAT, TPWY…RDVL, and VPLQ…RNTQ. Residues 301 to 397 form a disordered region; it reads EETKPPGSAS…EEEEEEEEDE (97 aa). The span at 321–332 shows a compositional bias: basic and acidic residues; sequence KFEERESSRQSE. 2 stretches are compositionally biased toward acidic residues: residues 344–360 and 367–397; these read VEPE…EEKI and EEEE…EEDE.

It belongs to the calponin family. As to expression, expressed in pharyngeal muscle cells (at protein level).

Required for pharyngeal pumping. This is Calponin-like protein clik-2 from Caenorhabditis elegans.